A 48-amino-acid chain; its full sequence is uncharacterized protein (48 aa).

The chain crosses the membrane as a helical span at residues 20–37 (ILASPLFFANYVLHAAIH).

The protein resides in the membrane. This is an uncharacterized protein from Saccharomyces cerevisiae (strain ATCC 204508 / S288c) (Baker's yeast).